A 327-amino-acid chain; its full sequence is Glutamyl endopeptidase (327 aa).

Residues 1-29 form the signal peptide; the sequence is MKGKFLKVSSLFVATLTTATLVSSPAANA. Residues 30–68 constitute a propeptide that is removed on maturation; sequence LSSKAMDNHPQQSQSSKQQTPKIQKGGNLKPLEQREHAN. Residues 33 to 61 form a disordered region; sequence KAMDNHPQQSQSSKQQTPKIQKGGNLKPL. A compositionally biased stretch (low complexity) spans 40 to 54; the sequence is QQSQSSKQQTPKIQK. Residues H119, D161, and S237 each act as charge relay system in the active site. The disordered stretch occupies residues 283–327; that stretch reads FANDDQPNNPDNPDNPNNPDNPNNPNNPDNPDNGDNNNSDNPDAA. Low complexity predominate over residues 286–327; the sequence is DDQPNNPDNPDNPNNPDNPNNPNNPDNPDNGDNNNSDNPDAA. Repeat copies occupy residues 289–291, 292–294, 295–297, 298–300, 301–303, 304–306, 307–309, 310–312, and 313–315. The 9 X 3 AA repeats of P-[DN]-N stretch occupies residues 289–315; the sequence is PNNPDNPDNPNNPDNPNNPNNPDNPDN.

It belongs to the peptidase S1B family. Post-translationally, proteolytically cleaved by aureolysin (aur). This cleavage leads to the activation of SspA.

It is found in the secreted. The enzyme catalyses Preferential cleavage: Glu-|-Xaa, Asp-|-Xaa.. In terms of biological role, preferentially cleaves peptide bonds on the carboxyl-terminal side of aspartate and glutamate. Along with other extracellular proteases it is involved in colonization and infection of human tissues. Required for proteolytic maturation of thiol protease SspB and inactivation of SspC, an inhibitor of SspB. It is the most important protease for degradation of fibronectin-binding protein (FnBP) and surface protein A, which are involved in adherence to host cells. May also protect bacteria against host defense mechanism by cleaving the immunoglobulin classes IgG, IgA and IgM. May be involved in the stability of secreted lipases. The protein is Glutamyl endopeptidase (sspA) of Staphylococcus aureus (strain MW2).